We begin with the raw amino-acid sequence, 128 residues long: Small ribosomal subunit protein uS11 (128 aa).

This sequence belongs to the universal ribosomal protein uS11 family. As to quaternary structure, part of the 30S ribosomal subunit. Interacts with proteins S7 and S18. Binds to IF-3.

Functionally, located on the platform of the 30S subunit, it bridges several disparate RNA helices of the 16S rRNA. Forms part of the Shine-Dalgarno cleft in the 70S ribosome. The chain is Small ribosomal subunit protein uS11 from Desulfosudis oleivorans (strain DSM 6200 / JCM 39069 / Hxd3) (Desulfococcus oleovorans).